Here is a 146-residue protein sequence, read N- to C-terminus: Snaclec agkisacutacin subunit B (146 aa).

Positions 1–23 (MGRFIFVSFGLLVVFLSLSGTAA) are cleaved as a signal peptide. In terms of domain architecture, C-type lectin spans 24–146 (DCPSDWSSYE…TCSFVCKFQA (123 aa)). Disulfide bonds link Cys25–Cys36, Cys53–Cys142, and Cys119–Cys134. Residues Ser64 and Glu70 each contribute to the Ca(2+) site.

This sequence belongs to the snaclec family. Heterodimer of subunits A and B; disulfide-linked. In terms of tissue distribution, expressed by the venom gland.

The protein resides in the secreted. Its function is as follows. Anticoagulant protein which binds to the gamma-carboxyglutamic acid-domain regions of factor IX (F9) and factor X (F10) in the presence of calcium with a 1 to 1 stoichiometry. Also inhibits platelet aggregation by binding to platelet glycoprotein Ibalpha (GP1BA) and functioning as a blocker of von Willebrand factor (VWF). Is devoid of hemorrhagic and lethal activities. Possesses antithrombotic and thrombolytic activities. Also hydrolyzes the Aalpha-chain of fibrinogen (FGA). Does not affect the Bbeta-chain (FGB) and the gamma chain (FGG). In Deinagkistrodon acutus (Hundred-pace snake), this protein is Snaclec agkisacutacin subunit B.